Consider the following 453-residue polypeptide: Signal transduction histidine-protein kinase ArlS (453 aa).

A run of 2 helical transmembrane segments spans residues 14–34 and 157–177; these read ITTL…IFFL and FVAI…SYIF. Positions 179–232 constitute an HAMP domain; the sequence is TQLTKPLVTMSNKMIQIRRDGFQNKLELKTNYEETDNLIDTFNDMMYQIEESFN. The region spanning 240-453 is the Histidine kinase domain; sequence DASHELRTPL…QYTTFKIIFK (214 aa). A Phosphohistidine; by autocatalysis modification is found at His243.

Post-translationally, autophosphorylated.

It localises to the cell membrane. The catalysed reaction is ATP + protein L-histidine = ADP + protein N-phospho-L-histidine.. Member of the two-component regulatory system ArlS/ArlR. ArlS probably functions as a sensor protein kinase which is autophosphorylated at a histidine residue and transfers its phosphate group to ArlR. The polypeptide is Signal transduction histidine-protein kinase ArlS (arlS) (Staphylococcus haemolyticus (strain JCSC1435)).